Reading from the N-terminus, the 120-residue chain is MPRVKGGSVTRQRRKKIIKLAKGYRGAKHIQFKVAKQQVMKSYQYAFRDRRKTKSNFRKLWIARINAAARQNDISYSKLMHGLKLANVEVNRKMLADLAITDAAAFTALVDEAKKALAAE.

The protein belongs to the bacterial ribosomal protein bL20 family.

Its function is as follows. Binds directly to 23S ribosomal RNA and is necessary for the in vitro assembly process of the 50S ribosomal subunit. It is not involved in the protein synthesizing functions of that subunit. The protein is Large ribosomal subunit protein bL20 of Ligilactobacillus salivarius (strain UCC118) (Lactobacillus salivarius).